The primary structure comprises 124 residues: Large ribosomal subunit protein bL36m (124 aa).

This sequence belongs to the bacterial ribosomal protein bL36 family. Component of the mitochondrial large ribosomal subunit (mt-LSU). Mature N.crassa 74S mitochondrial ribosomes consist of a small (37S) and a large (54S) subunit. The 37S small subunit contains a 16S ribosomal RNA (16S mt-rRNA) and 32 different proteins. The 54S large subunit contains a 23S rRNA (23S mt-rRNA) and 42 different proteins. bL36m has a zinc binding site.

The protein localises to the mitochondrion. In terms of biological role, component of the mitochondrial ribosome (mitoribosome), a dedicated translation machinery responsible for the synthesis of mitochondrial genome-encoded proteins, including at least some of the essential transmembrane subunits of the mitochondrial respiratory chain. The mitoribosomes are attached to the mitochondrial inner membrane and translation products are cotranslationally integrated into the membrane. This is Large ribosomal subunit protein bL36m (rtc6) from Neurospora crassa (strain ATCC 24698 / 74-OR23-1A / CBS 708.71 / DSM 1257 / FGSC 987).